The primary structure comprises 150 residues: Large ribosomal subunit protein uL13 (150 aa).

Belongs to the universal ribosomal protein uL13 family. In terms of assembly, part of the 50S ribosomal subunit.

This protein is one of the early assembly proteins of the 50S ribosomal subunit, although it is not seen to bind rRNA by itself. It is important during the early stages of 50S assembly. This chain is Large ribosomal subunit protein uL13, found in Persephonella marina (strain DSM 14350 / EX-H1).